We begin with the raw amino-acid sequence, 272 residues long: NAD kinase (272 aa).

Catalysis depends on Asp62, which acts as the Proton acceptor. Residues 62 to 63, Arg67, 129 to 130, Arg140, Lys157, Asp159, 170 to 175, Ala194, and Gln229 contribute to the NAD(+) site; these read DG, NE, and SSYSSS.

Belongs to the NAD kinase family. Requires a divalent metal cation as cofactor.

The protein localises to the cytoplasm. It carries out the reaction NAD(+) + ATP = ADP + NADP(+) + H(+). Functionally, involved in the regulation of the intracellular balance of NAD and NADP, and is a key enzyme in the biosynthesis of NADP. Catalyzes specifically the phosphorylation on 2'-hydroxyl of the adenosine moiety of NAD to yield NADP. The polypeptide is NAD kinase (Thermoplasma volcanium (strain ATCC 51530 / DSM 4299 / JCM 9571 / NBRC 15438 / GSS1)).